The following is a 90-amino-acid chain: Probable Fe(2+)-trafficking protein (90 aa).

Belongs to the Fe(2+)-trafficking protein family.

Could be a mediator in iron transactions between iron acquisition and iron-requiring processes, such as synthesis and/or repair of Fe-S clusters in biosynthetic enzymes. In Aliivibrio salmonicida (strain LFI1238) (Vibrio salmonicida (strain LFI1238)), this protein is Probable Fe(2+)-trafficking protein.